We begin with the raw amino-acid sequence, 132 residues long: Small ribosomal subunit protein uS8 (132 aa).

It belongs to the universal ribosomal protein uS8 family. Part of the 30S ribosomal subunit. Contacts proteins S5 and S12.

Its function is as follows. One of the primary rRNA binding proteins, it binds directly to 16S rRNA central domain where it helps coordinate assembly of the platform of the 30S subunit. The polypeptide is Small ribosomal subunit protein uS8 (Staphylococcus aureus (strain USA300)).